Here is a 220-residue protein sequence, read N- to C-terminus: Probable nicotinate-nucleotide adenylyltransferase (220 aa).

It belongs to the NadD family.

The enzyme catalyses nicotinate beta-D-ribonucleotide + ATP + H(+) = deamido-NAD(+) + diphosphate. Its pathway is cofactor biosynthesis; NAD(+) biosynthesis; deamido-NAD(+) from nicotinate D-ribonucleotide: step 1/1. Its function is as follows. Catalyzes the reversible adenylation of nicotinate mononucleotide (NaMN) to nicotinic acid adenine dinucleotide (NaAD). The sequence is that of Probable nicotinate-nucleotide adenylyltransferase from Yersinia enterocolitica serotype O:8 / biotype 1B (strain NCTC 13174 / 8081).